The primary structure comprises 622 residues: Cytochrome c oxidase subunit 1 (622 aa).

Topologically, residues Met-1–Ile-27 are extracellular. A helical transmembrane segment spans residues Ala-28–Ala-46. The Cytoplasmic portion of the chain corresponds to Met-47 to Glu-68. A helical transmembrane segment spans residues Val-69–Ala-88. His-73 serves as a coordination point for Fe(II)-heme a. Residues Leu-89 to Ala-110 are Extracellular-facing. A helical transmembrane segment spans residues Leu-111–Phe-128. Residues Leu-129–Leu-159 are Cytoplasmic-facing. Residues Gln-160 to Ile-178 traverse the membrane as a helical segment. Residues Asn-179–Thr-196 are Extracellular-facing. The helical transmembrane segment at Thr-197–Leu-215 threads the bilayer. Over Ala-216–Glu-241 the chain is Cytoplasmic. The chain crosses the membrane as a helical span at residues His-242–Gly-261. 2 residues coordinate Cu cation: His-249 and Tyr-253. Residues His-249–Tyr-253 constitute a cross-link (1'-histidyl-3'-tyrosine (His-Tyr)). The Extracellular segment spans residues Ile-262 to Ala-284. The chain crosses the membrane as a helical span at residues Ile-285–Gly-304. 2 residues coordinate Cu cation: His-298 and His-299. Residues Leu-305 to Ile-312 lie on the Cytoplasmic side of the membrane. Residues Phe-313–Trp-331 form a helical membrane-spanning segment. The Extracellular segment spans residues Leu-332–Met-346. A helical transmembrane segment spans residues Leu-347–Leu-366. Residues Ala-367–Gln-374 lie on the Cytoplasmic side of the membrane. A helical membrane pass occupies residues Phe-375–Val-394. His-384 contacts heme a3. Residue His-386 coordinates Fe(II)-heme a. The Extracellular portion of the chain corresponds to Phe-395 to Ser-421. A helical transmembrane segment spans residues Phe-422–Leu-441. Topologically, residues Met-442 to Thr-459 are cytoplasmic. Residues Gly-460–Leu-479 form a helical membrane-spanning segment. Residues Val-480–Asn-552 are Extracellular-facing. Residues Gly-553–Leu-572 traverse the membrane as a helical segment. At Tyr-573–Gly-580 the chain is on the cytoplasmic side. The chain crosses the membrane as a helical span at residues Leu-581–His-604. Residues Gly-605–Ala-622 lie on the Cytoplasmic side of the membrane.

This sequence belongs to the heme-copper respiratory oxidase family. Cu(2+) serves as cofactor. Heme is required as a cofactor.

Its subcellular location is the cell membrane. It carries out the reaction 4 Fe(II)-[cytochrome c] + O2 + 8 H(+)(in) = 4 Fe(III)-[cytochrome c] + 2 H2O + 4 H(+)(out). Its pathway is energy metabolism; oxidative phosphorylation. Functionally, cytochrome c oxidase is the component of the respiratory chain that catalyzes the reduction of oxygen to water. Subunits 1-3 form the functional core of the enzyme complex. Co I is the catalytic subunit of the enzyme. Electrons originating in cytochrome c are transferred via the copper A center of subunit 2 and heme a of subunit 1 to the bimetallic center formed by heme a3 and copper B. This cytochrome c oxidase shows proton pump activity across the membrane in addition to the electron transfer. This is Cytochrome c oxidase subunit 1 (ctaD) from Bacillus subtilis (strain 168).